The following is a 365-amino-acid chain: Magnesium-chelatase subunit ChlI homolog (365 aa).

Residue 40-47 coordinates ATP; that stretch reads EKGTAKST. The tract at residues 340–365 is disordered; sequence FKQQNNKDNEEKEEHKDDDVKKNMMK. Residues 344-365 are compositionally biased toward basic and acidic residues; that stretch reads NNKDNEEKEEHKDDDVKKNMMK.

This sequence belongs to the Mg-chelatase subunits D/I family.

The polypeptide is Magnesium-chelatase subunit ChlI homolog (Methanocaldococcus jannaschii (strain ATCC 43067 / DSM 2661 / JAL-1 / JCM 10045 / NBRC 100440) (Methanococcus jannaschii)).